The following is a 329-amino-acid chain: Prostaglandin reductase 1 (329 aa).

Phosphothreonine is present on Thr18. Ser20 carries the phosphoserine modification. Residues 152-155, Lys178, Tyr193, Asn217, 239-245, 270-272, and Asn321 each bind NADP(+); these read GAVG, CGAISTY, and FVV. Lys178 is subject to N6-(2-hydroxyisobutyryl)lysine; alternate. The residue at position 178 (Lys178) is an N6-acetyllysine; alternate.

This sequence belongs to the NADP-dependent oxidoreductase L4BD family. Monomer or homodimer. In terms of tissue distribution, high expression in the kidney, liver, and intestine but not in leukocytes.

It localises to the cytoplasm. The enzyme catalyses 13,14-dihydro-15-oxo-prostaglandin E1 + NADP(+) = 15-oxoprostaglandin E1 + NADPH + H(+). It carries out the reaction 13,14-dihydro-15-oxo-prostaglandin E2 + NADP(+) = 15-oxoprostaglandin E2 + NADPH + H(+). It catalyses the reaction 13,14-dihydro-15-oxo-prostaglandin F1alpha + NADP(+) = 15-oxoprostaglandin F1alpha + NADPH + H(+). The catalysed reaction is 13,14-dihydro-15-oxo-PGF2alpha + NADP(+) = 15-oxoprostaglandin F2alpha + NADPH + H(+). The enzyme catalyses leukotriene B4 + NADP(+) = 12-oxo-leukotriene B4 + NADPH + H(+). It carries out the reaction 20-hydroxy-leukotriene B4 + NADP(+) = 12-oxo-20-hydroxy-leukotriene B4 + NADPH + H(+). It catalyses the reaction 6-trans-leukotriene B4 + NADP(+) = 12-oxo-(5S)-hydroxy-(6E,8E,10E,14Z)-eicosatetraenoate + NADPH + H(+). The catalysed reaction is (5S,12S)-dihydroxy-(6E,10E,12E,14Z)-eicosatetraenoate + NADP(+) = 12-oxo-(5S)-hydroxy-(6E,8E,10E,14Z)-eicosatetraenoate + NADPH + H(+). The enzyme catalyses an n-alkanal + NADP(+) = an alk-2-enal + NADPH + H(+). It carries out the reaction hexanal + NADP(+) = (E)-hex-2-enal + NADPH + H(+). It catalyses the reaction octanal + NADP(+) = (2E)-octenal + NADPH + H(+). The catalysed reaction is decanal + NADP(+) = (2E)-decenal + NADPH + H(+). The enzyme catalyses dodecanal + NADP(+) = (2E)-dodecenal + NADPH + H(+). It carries out the reaction 4-hydroxynonanal + NADP(+) = (E)-4-hydroxynon-2-enal + NADPH + H(+). It catalyses the reaction pentan-2-one + NADP(+) = (E)-pent-3-en-2-one + NADPH + H(+). The catalysed reaction is nonan-2-one + NADP(+) = (3E)-nonen-2-one + NADPH + H(+). NAD(P)H-dependent oxidoreductase involved in metabolic inactivation of pro- and anti-inflammatory eicosanoids: prostaglandins (PG), leukotrienes (LT) and lipoxins (LX). Catalyzes with high efficiency the reduction of the 13,14 double bond of 15-oxoPGs, including 15-oxo-PGE1, 15-oxo-PGE2, 15-oxo-PGF1-alpha and 15-oxo-PGF2-alpha. Catalyzes with lower efficiency the oxidation of the hydroxyl group at C12 of LTB4 and its derivatives, converting them into biologically less active 12-oxo-LTB4 metabolites. Reduces 15-oxo-LXA4 to 13,14 dihydro-15-oxo-LXA4, enhancing neutrophil recruitment at the inflammatory site. May play a role in metabolic detoxification of alkenals and ketones. Reduces alpha,beta-unsaturated alkenals and ketones, particularly those with medium-chain length, showing highest affinity toward (2E)-decenal and (3E)-3-nonen-2-one. May inactivate 4-hydroxy-2-nonenal, a cytotoxic lipid constituent of oxidized low-density lipoprotein particles. This chain is Prostaglandin reductase 1 (PTGR1), found in Homo sapiens (Human).